A 201-amino-acid chain; its full sequence is 3-isopropylmalate dehydratase small subunit (201 aa).

It belongs to the LeuD family. LeuD type 1 subfamily. In terms of assembly, heterodimer of LeuC and LeuD.

It carries out the reaction (2R,3S)-3-isopropylmalate = (2S)-2-isopropylmalate. It functions in the pathway amino-acid biosynthesis; L-leucine biosynthesis; L-leucine from 3-methyl-2-oxobutanoate: step 2/4. Functionally, catalyzes the isomerization between 2-isopropylmalate and 3-isopropylmalate, via the formation of 2-isopropylmaleate. In Rhizobium meliloti (strain 1021) (Ensifer meliloti), this protein is 3-isopropylmalate dehydratase small subunit.